We begin with the raw amino-acid sequence, 354 residues long: MEKFKAAMLLGSVGDALGYRNVCKENSTVGMKIQEELQRSGGLDHLVLSPGEWPVSDNTIMHIATAEALTTDYWCLDDLYREMVRCYVEIVEKLPERRPDPATIEGCAQLKPNNYLLAWHTPFNEKGSGFGAATKAMCIGLRYWKPERLETLIEVSVECGRMTHNHPTGFLGSLCTALFVSFAAQGKPLVQWGRDMLRAVPLAEEYCRKTIRHTAEYQEHWFYFEAKWQFYLEERKISKDSENKAIFPDNYDAEEREKTYRKWSSEGRGGRRGHDAPMIAYDALLAAGNSWTELCHRAMFHGGESAATGTIAGCLFGLLYGLDLVPKGLYQDLEDKEKLEDLGAALYRLSTEEK.

Ser27 is modified (phosphoserine).

Belongs to the ADP-ribosylglycohydrolase family.

The protein localises to the cytoplasm. It is found in the myofibril. It localises to the sarcomere. Required for myofibril assembly and outgrowth of the cardiac chambers in the developing heart. Appears to be catalytically inactive, showing no activity against O-acetyl-ADP-ribose. The sequence is that of Inactive ADP-ribosyltransferase ARH2 (ADPRHL1) from Homo sapiens (Human).